The primary structure comprises 256 residues: Gluconate 5-dehydrogenase (256 aa).

Residue 15–39 (LVTGASRGIGLTLAKGLARYGAEVV) coordinates NADP(+). Ser-147 provides a ligand contact to substrate. The active-site Proton acceptor is Tyr-160.

This sequence belongs to the short-chain dehydrogenases/reductases (SDR) family. As to quaternary structure, homodimer.

It localises to the cytoplasm. The enzyme catalyses D-gluconate + NADP(+) = 5-dehydro-D-gluconate + NADPH + H(+). Its function is as follows. Catalyzes the reversible NADP-dependent oxidation of gluconate to 5-ketogluconate. Is involved in the non-phosphorylative, ketogenic oxidation of glucose. Is almost inactive with NAD as cosubstrate. Displays high substrate specificity since D-Glucose, D-sorbitol, and D-mannitol are not oxidized by the enzyme, and 2-ketogluconate and L-sorbose are not reduced. Can accept D-fructose as a substrate, with a rate that is only 10% of the rate of 5-ketogluconate reduction. The chain is Gluconate 5-dehydrogenase from Gluconobacter oxydans (strain 621H) (Gluconobacter suboxydans).